The primary structure comprises 277 residues: Release factor glutamine methyltransferase (277 aa).

Residues Gly-117–Gly-121, Asp-140, Trp-168, and Asn-183 contribute to the S-adenosyl-L-methionine site. A substrate-binding site is contributed by Asn-183–Tyr-186.

Belongs to the protein N5-glutamine methyltransferase family. PrmC subfamily.

The catalysed reaction is L-glutaminyl-[peptide chain release factor] + S-adenosyl-L-methionine = N(5)-methyl-L-glutaminyl-[peptide chain release factor] + S-adenosyl-L-homocysteine + H(+). Methylates the class 1 translation termination release factors RF1/PrfA and RF2/PrfB on the glutamine residue of the universally conserved GGQ motif. The protein is Release factor glutamine methyltransferase of Salmonella typhimurium (strain LT2 / SGSC1412 / ATCC 700720).